A 532-amino-acid chain; its full sequence is Probable bifunctional tRNA threonylcarbamoyladenosine biosynthesis protein (532 aa).

Residues 1-323 are kae1; that stretch reads MRVLGVEGTA…FRPDEVSVTW (323 aa). Residues H107 and H111 each coordinate Fe cation. L-threonylcarbamoyladenylate-binding positions include 128–132, D160, G173, E177, and N256; that span reads NASGA. D284 provides a ligand contact to Fe cation. The region spanning 329–532 is the Protein kinase domain; it reads PARDPGADAV…GRYQDDPETA (204 aa). ATP is bound by residues 338–346 and K355; that span reads VRQGAEATV. The Proton acceptor; for kinase activity role is filled by D444.

The protein in the N-terminal section; belongs to the KAE1 / TsaD family. It in the C-terminal section; belongs to the protein kinase superfamily. Tyr protein kinase family. BUD32 subfamily. In terms of assembly, component of the KEOPS complex that consists of Kae1, Bud32, Cgi121 and Pcc1; the whole complex dimerizes. Fe(2+) serves as cofactor.

It is found in the cytoplasm. The enzyme catalyses L-seryl-[protein] + ATP = O-phospho-L-seryl-[protein] + ADP + H(+). The catalysed reaction is L-threonyl-[protein] + ATP = O-phospho-L-threonyl-[protein] + ADP + H(+). It catalyses the reaction L-threonylcarbamoyladenylate + adenosine(37) in tRNA = N(6)-L-threonylcarbamoyladenosine(37) in tRNA + AMP + H(+). Functionally, required for the formation of a threonylcarbamoyl group on adenosine at position 37 (t(6)A37) in tRNAs that read codons beginning with adenine. Is a component of the KEOPS complex that is probably involved in the transfer of the threonylcarbamoyl moiety of threonylcarbamoyl-AMP (TC-AMP) to the N6 group of A37. The Kae1 domain likely plays a direct catalytic role in this reaction. The Bud32 domain probably displays kinase activity that regulates Kae1 function. The chain is Probable bifunctional tRNA threonylcarbamoyladenosine biosynthesis protein from Halobacterium salinarum (strain ATCC 700922 / JCM 11081 / NRC-1) (Halobacterium halobium).